Here is a 408-residue protein sequence, read N- to C-terminus: Putative agmatinase 3 (408 aa).

The N-terminal stretch at 1–21 (MKSVEWFTWGVFLLLSGFGEA) is a signal peptide. Mn(2+)-binding residues include histidine 198, aspartate 222, histidine 224, aspartate 226, aspartate 319, and aspartate 321.

It belongs to the arginase family. Mn(2+) is required as a cofactor.

The catalysed reaction is agmatine + H2O = urea + putrescine. The polypeptide is Putative agmatinase 3 (Schizosaccharomyces pombe (strain 972 / ATCC 24843) (Fission yeast)).